We begin with the raw amino-acid sequence, 443 residues long: Endothelin receptor type B (443 aa).

The signal sequence occupies residues 1–26; the sequence is MQPLPTLCGRVLVALILACGVAGVQG. Residues 27–102 are Extracellular-facing; that stretch reads EERRFPPARA…RTIEIKETFK (76 aa). A compositionally biased stretch (polar residues) spans 51 to 62; sequence TKTSWPTGSNAS. The interval 51 to 89 is disordered; sequence TKTSWPTGSNASVPRLSAPPQMPKAGRTAGAQRRTLPPP. N-linked (GlcNAc...) asparagine glycosylation occurs at asparagine 60. Residues 103 to 127 traverse the membrane as a helical segment; it reads YINTVVSCLVFVLGIIGNSTLLRII. The Cytoplasmic segment spans residues 128 to 138; that stretch reads YKNKCMRNGPN. A helical membrane pass occupies residues 139 to 164; the sequence is ILIASLALGDLLHIIIDIPINVYKLL. Residues 165 to 176 are Extracellular-facing; that stretch reads AEDWPFGVEMCK. Cysteine 175 and cysteine 256 are oxidised to a cystine. The chain crosses the membrane as a helical span at residues 177-198; sequence LVPFIQKASVGITVLSLCALSI. The Cytoplasmic portion of the chain corresponds to 199-219; the sequence is DRYRAVASWSRIKGIGVPKWT. The helical transmembrane segment at 220-244 threads the bilayer; sequence AVEIVLIWVVSVVLAVPEAVGFDMI. At 245–272 the chain is on the extracellular side; that stretch reads TADYKGSYLRICLLHPTQKTAFMQFYKN. The helical transmembrane segment at 273–297 threads the bilayer; the sequence is AKDWWLFSFYFCLPLAITAFFYTLE. At 298-325 the chain is on the cytoplasmic side; sequence TCEMLRKKSGMQIALNDHLKQRREVAKT. Serine 306 is subject to Phosphoserine. Residues 326 to 351 traverse the membrane as a helical segment; that stretch reads VFCLVLVFALCWLPLHLSRILKHTLY. The Extracellular segment spans residues 352-363; sequence DQNDPHRCELLS. Residues 364 to 390 traverse the membrane as a helical segment; that stretch reads FLLVLEYIGINMASLNSCINPIALYLV. The Cytoplasmic segment spans residues 391-443; sequence SKRFKNCFKWCLCCWCQSFEEKQSLEDKQSCLKFKANDHGYDNFRSSNKYSSS. S-palmitoyl cysteine attachment occurs at residues cysteine 403, cysteine 404, and cysteine 406. Serine 420 is modified (phosphoserine). Tyrosine 440 is subject to Phosphotyrosine. A phosphoserine mark is found at serine 441, serine 442, and serine 443.

Belongs to the G-protein coupled receptor 1 family. Endothelin receptor subfamily. EDNRB sub-subfamily.

The protein resides in the cell membrane. In terms of biological role, non-specific receptor for endothelin 1, 2, and 3. Mediates its action by association with G proteins that activate a phosphatidylinositol-calcium second messenger system. The polypeptide is Endothelin receptor type B (EDNRB) (Equus caballus (Horse)).